We begin with the raw amino-acid sequence, 266 residues long: UPF0294 protein YafD (266 aa).

The protein belongs to the UPF0294 family.

The protein localises to the cytoplasm. The chain is UPF0294 protein YafD from Shigella dysenteriae serotype 1 (strain Sd197).